A 304-amino-acid polypeptide reads, in one-letter code: Acetylglutamate kinase (304 aa).

Substrate is bound by residues 70 to 71 (GG), arginine 92, and asparagine 185.

The protein belongs to the acetylglutamate kinase family. ArgB subfamily.

The protein resides in the cytoplasm. The catalysed reaction is N-acetyl-L-glutamate + ATP = N-acetyl-L-glutamyl 5-phosphate + ADP. It functions in the pathway amino-acid biosynthesis; L-arginine biosynthesis; N(2)-acetyl-L-ornithine from L-glutamate: step 2/4. Its function is as follows. Catalyzes the ATP-dependent phosphorylation of N-acetyl-L-glutamate. The polypeptide is Acetylglutamate kinase (Paracoccus denitrificans (strain Pd 1222)).